An 825-amino-acid polypeptide reads, in one-letter code: Endochitinase A1 (825 aa).

The N-terminal stretch at 1–22 is a signal peptide; the sequence is MVSSKLSFVATAVAALAPLASA. Residues 29–338 enclose the GH18 domain; sequence SNLAIYWGQG…DHMKDILLHC (310 aa). Glu-174 (proton donor) is an active-site residue. 3 disordered regions span residues 338-568, 680-736, and 750-792; these read CDPS…TTTA, PVTE…VSTS, and PLIL…YTQE. Residues 344 to 554 show a composition bias toward low complexity; sequence VTSSSAVPSS…STDESSTTVG (211 aa). Asn-559 carries an N-linked (GlcNAc...) asparagine glycan. Residues 701 to 712 are compositionally biased toward polar residues; the sequence is EGSNPTQPSGAS. The N-linked (GlcNAc...) asparagine glycan is linked to Asn-717. Residues 772–792 show a composition bias toward polar residues; sequence PSGQNSGSSSHVPIPPSYTQE. A lipid anchor (GPI-anchor amidated glycine) is attached at Gly-800. A propeptide spans 801–825 (removed in mature form); that stretch reads AASRVTGLGHGLVLTVLTLSAFFVL.

Belongs to the glycosyl hydrolase 18 family. Chitinase class III subfamily. Post-translationally, O-mannosylated by pmt4.

The protein resides in the cell membrane. It is found in the secreted. The protein localises to the cell wall. It carries out the reaction Random endo-hydrolysis of N-acetyl-beta-D-glucosaminide (1-&gt;4)-beta-linkages in chitin and chitodextrins.. Its activity is regulated as follows. The cyclic peptide natural product argifin acts as a specific inhibitor. GPI-anchored chitinase involved in the degradation of chitin, a component of the cell walls of fungi and exoskeletal elements of some animals (including worms and arthropods). Required to reshape the cell wall at the sites where cell wall remodeling and/or cell wall maturation actively take place such as sites of conidia formation. In Aspergillus fumigatus (Neosartorya fumigata), this protein is Endochitinase A1 (chiA1).